A 306-amino-acid polypeptide reads, in one-letter code: Ribonuclease Z (306 aa).

Zn(2+) contacts are provided by histidine 61, histidine 63, aspartate 65, histidine 66, histidine 137, aspartate 207, and histidine 263. The Proton acceptor role is filled by aspartate 65.

The protein belongs to the RNase Z family. As to quaternary structure, homodimer. The cofactor is Zn(2+).

It catalyses the reaction Endonucleolytic cleavage of RNA, removing extra 3' nucleotides from tRNA precursor, generating 3' termini of tRNAs. A 3'-hydroxy group is left at the tRNA terminus and a 5'-phosphoryl group is left at the trailer molecule.. Functionally, zinc phosphodiesterase, which displays some tRNA 3'-processing endonuclease activity. Probably involved in tRNA maturation, by removing a 3'-trailer from precursor tRNA. The chain is Ribonuclease Z from Thermococcus sibiricus (strain DSM 12597 / MM 739).